The chain runs to 424 residues: UPF0597 protein Shewmr7_2876 (424 aa).

This sequence belongs to the UPF0597 family.

This is UPF0597 protein Shewmr7_2876 from Shewanella sp. (strain MR-7).